The primary structure comprises 369 residues: MCPLWLLTLLLALSQALPFEQKGFWDFTLDDGLLMMNDEEASGSDTTSGVPDLDSVTPTFSAMCPFGCHCHLRVVQCSDLGLKTVPKEISPDTTLLDLQNNDISELRKDDFKGLQHLYALVLVNNKISKIHEKAFSPLRKLQKLYISKNHLVEIPPNLPSSLVELRIHDNRIRKVPKGVFSGLRNMNCIEMGGNPLENSGFEPGAFDGLKLNYLRISEAKLTGIPKDLPETLNELHLDHNKIQAIELEDLLRYSKLYRLGLGHNQIRMIENGSLSFLPTLRELHLDNNKLSRVPAGLPDLKLLQVVYLHSNNITKVGINDFCPMGFGVKRAYYNGISLFNNPVPYWEVQPATFRCVTDRLAIQFGNYKK.

Positions 1–16 (MCPLWLLTLLLALSQA) are cleaved as a signal peptide. Positions 17 to 37 (LPFEQKGFWDFTLDDGLLMMN) are excised as a propeptide. Residues Ser42 and Ser48 are each glycosylated (O-linked (Xyl...) (glycosaminoglycan) serine). 2 cysteine pairs are disulfide-bonded: Cys64/Cys70 and Cys68/Cys77. LRR repeat units follow at residues 83–103 (KTVP…NNDI), 104–127 (SELR…NNKI), 128–151 (SKIH…KNHL), 152–172 (VEIP…DNRI), 173–196 (RKVP…GNPL), 197–221 (ENSG…EAKL), 222–242 (TGIP…HNKI), 243–266 (QAIE…HNQI), 267–290 (RMIE…NNKL), 291–313 (SRVP…SNNI), 314–343 (TKVG…NNPV), and 344–369 (PYWE…NYKK). 2 N-linked (GlcNAc...) asparagine glycosylation sites follow: Asn271 and Asn312. The cysteines at positions 322 and 355 are disulfide-linked.

This sequence belongs to the small leucine-rich proteoglycan (SLRP) family. SLRP class I subfamily. In terms of processing, the two attached glycosaminoglycan chains can be either chondroitin sulfate or dermatan sulfate. As to expression, found in several connective tissues, especially in articular cartilages.

The protein resides in the secreted. It localises to the extracellular space. It is found in the extracellular matrix. May be involved in collagen fiber assembly. The protein is Biglycan (Bgn) of Mus musculus (Mouse).